The primary structure comprises 73 residues: Antimicrobial peptide 6 (73 aa).

An N-terminal signal peptide occupies residues 1 to 22 (MQIKHLITLFFLVLIVADQCSA). The propeptide occupies 45 to 73 (EISTQIDQYRNLQKREAELEELLDRLPMY).

It belongs to the non-disulfide-bridged peptide (NDBP) superfamily. Short antimicrobial peptide (group 4) family. Expressed by the venom gland.

It is found in the secreted. Functionally, antibacterial peptide. This is Antimicrobial peptide 6 from Tityus costatus (Brazilian scorpion).